A 578-amino-acid polypeptide reads, in one-letter code: Probable arginine--tRNA ligase, mitochondrial (578 aa).

The N-terminal 16 residues, Met-1–Val-16, are a transit peptide targeting the mitochondrion. Residues Ser-133 to Asn-135, His-144, Tyr-322, Asp-326, and Gln-350 each bind L-arginine. The 'HIGH' region signature appears at Ser-133–His-144. Lys-568 carries the N6-acetyllysine modification.

The protein belongs to the class-I aminoacyl-tRNA synthetase family.

Its subcellular location is the mitochondrion membrane. The catalysed reaction is tRNA(Arg) + L-arginine + ATP = L-arginyl-tRNA(Arg) + AMP + diphosphate. Catalyzes the attachment of arginine to tRNA(Arg) in a two-step reaction: arginine is first activated by ATP to form Arg-AMP and then transferred to the acceptor end of tRNA(Arg). The sequence is that of Probable arginine--tRNA ligase, mitochondrial (RARS2) from Bos taurus (Bovine).